A 247-amino-acid chain; its full sequence is 2,3-bisphosphoglycerate-dependent phosphoglycerate mutase (247 aa).

Residues 8–15 (RHGESVWN), 21–22 (TG), Arg60, 87–90 (ERHY), Lys98, 114–115 (RR), and 183–184 (GN) contribute to the substrate site. The active-site Tele-phosphohistidine intermediate is the His9. The active-site Proton donor/acceptor is the Glu87.

Belongs to the phosphoglycerate mutase family. BPG-dependent PGAM subfamily. As to quaternary structure, homodimer.

The catalysed reaction is (2R)-2-phosphoglycerate = (2R)-3-phosphoglycerate. It participates in carbohydrate degradation; glycolysis; pyruvate from D-glyceraldehyde 3-phosphate: step 3/5. Functionally, catalyzes the interconversion of 2-phosphoglycerate and 3-phosphoglycerate. The sequence is that of 2,3-bisphosphoglycerate-dependent phosphoglycerate mutase from Geobacter sulfurreducens (strain ATCC 51573 / DSM 12127 / PCA).